Here is a 611-residue protein sequence, read N- to C-terminus: Glutamine--fructose-6-phosphate aminotransferase [isomerizing] (611 aa).

Cysteine 2 serves as the catalytic Nucleophile; for GATase activity. Residues 2-219 (CGIVGGVSKT…DGDVAMLQRQ (218 aa)) form the Glutamine amidotransferase type-2 domain. 2 consecutive SIS domains span residues 287–427 (AAAM…APGA) and 460–601 (WAAR…VDRP). The active-site For Fru-6P isomerization activity is the lysine 606.

In terms of assembly, homodimer.

The protein localises to the cytoplasm. The enzyme catalyses D-fructose 6-phosphate + L-glutamine = D-glucosamine 6-phosphate + L-glutamate. Functionally, catalyzes the first step in hexosamine metabolism, converting fructose-6P into glucosamine-6P using glutamine as a nitrogen source. The sequence is that of Glutamine--fructose-6-phosphate aminotransferase [isomerizing] from Acidithiobacillus ferridurans.